Here is a 221-residue protein sequence, read N- to C-terminus: MNNTILILKNISKHYSQGKTIVRVLDDLNLTVNEGELIAIIGSSGSGKSTLLHIAGLLDKPTKGQVIIPNSKYQKYHLIRLHYLGFIYQQHHLLKDFTALENVIMPRLISGLDQKEAIEDATKILDDLGLGKKLYNMPGELSGGEKQRVAIARSLINKPKIILADEPTGNLDPKTTNEVFNLFLKVAREQNTAIIMVTHNYELAHKMDKLYKLKHRLLNIA.

The 215-residue stretch at leucine 6 to isoleucine 220 folds into the ABC transporter domain. Glycine 42–serine 49 is a binding site for ATP.

This sequence belongs to the ABC transporter superfamily. Lipoprotein translocase (TC 3.A.1.125) family. The complex is composed of two ATP-binding proteins (LolD) and two transmembrane proteins (LolC and LolE).

Its subcellular location is the cell inner membrane. Functionally, part of the ABC transporter complex LolCDE involved in the translocation of mature outer membrane-directed lipoproteins, from the inner membrane to the periplasmic chaperone, LolA. Responsible for the formation of the LolA-lipoprotein complex in an ATP-dependent manner. The chain is Lipoprotein-releasing system ATP-binding protein LolD from Rickettsia conorii (strain ATCC VR-613 / Malish 7).